The following is a 370-amino-acid chain: UDP-3-O-acylglucosamine N-acyltransferase (370 aa).

His-252 serves as the catalytic Proton acceptor. The segment at 350-370 is disordered; it reads AAGRQDGPAANAASSSAGDKA. The segment covering 358–370 has biased composition (low complexity); it reads AANAASSSAGDKA.

Belongs to the transferase hexapeptide repeat family. LpxD subfamily. Homotrimer.

It catalyses the reaction a UDP-3-O-[(3R)-3-hydroxyacyl]-alpha-D-glucosamine + a (3R)-hydroxyacyl-[ACP] = a UDP-2-N,3-O-bis[(3R)-3-hydroxyacyl]-alpha-D-glucosamine + holo-[ACP] + H(+). The protein operates within bacterial outer membrane biogenesis; LPS lipid A biosynthesis. In terms of biological role, catalyzes the N-acylation of UDP-3-O-acylglucosamine using 3-hydroxyacyl-ACP as the acyl donor. Is involved in the biosynthesis of lipid A, a phosphorylated glycolipid that anchors the lipopolysaccharide to the outer membrane of the cell. The sequence is that of UDP-3-O-acylglucosamine N-acyltransferase from Paraburkholderia xenovorans (strain LB400).